Here is an 828-residue protein sequence, read N- to C-terminus: Neurotrophin receptor-interacting factor 1 (828 aa).

One can recognise a KRAB 1 domain in the interval 14-85 (VKFEDVSLTF…QREIPQDTLP (72 aa)). Lysine 15 participates in a covalent cross-link: Glycyl lysine isopeptide (Lys-Gly) (interchain with G-Cter in ubiquitin). The region spanning 158–240 (RQKFRHFQYE…ALLENMTSVS (83 aa)) is the SCAN box domain. A KRAB 2 domain is found at 280–370 (VTFQDVAVDF…ESILEDGVKE (91 aa)). 3 disordered regions span residues 328 to 355 (RELTPDSPIPVVKPIHDPNTNDLSRNGT), 377 to 490 (NQVG…DPIT), and 575 to 611 (QKGYKEGNVQGNRNSWKHIKPHQKGSKGERVEELSTS). Over residues 345–355 (PNTNDLSRNGT) the composition is skewed to polar residues. The segment covering 384–394 (EKGHPQKKFSE) has biased composition (basic and acidic residues). Positions 418-433 (KYVKVKQKGTGKRKGR) are enriched in basic residues. Residues 458 to 478 (RSGSTPVTHGSSIKKQQQGSE) show a composition bias toward polar residues. The span at 589–599 (SWKHIKPHQKG) shows a compositional bias: basic residues. Positions 600-611 (SKGERVEELSTS) are enriched in basic and acidic residues. 5 C2H2-type zinc fingers span residues 684-706 (CRCSECGKLFRNARYFSVHKKIH), 712-734 (YMCMACGKAFVQSSSLTQHLRIH), 740-762 (FECSECGRTFNDRSAISQHLRTH), 768-790 (YHCERCGKAFRQSSHLTRHERTH), and 796-818 (YVCIKCGKAFTQSSHLIGHQKTH).

It belongs to the krueppel C2H2-type zinc-finger protein family. In terms of assembly, interacts with NGFR/p75(NTR). Interacts (via KRAB 1 domain) with TRAF6. Interacts (when ubiquitinated at Lys-15) with SQSTM1/p62. Post-translationally, ubiquitinated by TRAF6 at Lys-15 through 'Lys-63'-linked polyubiquitination. 'Lys-63'-linked polyubiquitination occurs in response to NGFR/p75(NTR) cleavage by gamma-secretase and promotes binding with the ICD cleavage product of NGFR/p75(NTR), followed by translocation into the nucleus and subsequent apoptosis. Ubiquitously expressed at low level. Expressed at higher level in testis.

The protein resides in the cytoplasm. The protein localises to the nucleus. In terms of biological role, transcription regulator involved in NGFR/p75(NTR)-mediated apoptosis. Essential component of the NGFR/p75(NTR) apoptotic pathway: upon ligand-binding and subsequent cleavage of NGFR/p75(NTR), binds to the intracellular domain (ICD) cleavage product of NGFR/p75(NTR), translocates to the nucleus and induces apoptosis, possibly by regulating expression of key regulators of apoptosis. Induces NGFR/p75(NTR)-mediated apoptosis in retina and sympathetic neurons. May also regulate expression of neuronal cholesterol biosynthesis genes. Probably acts as a transcription repressor: specifically binds to the 3'-end of zinc-finger coding genes and recruiting chromatin-modifying proteins such as SETDB1 and TRIM28/KAP1, leading to transcription repression. The polypeptide is Neurotrophin receptor-interacting factor 1 (Nrif1) (Mus musculus (Mouse)).